A 472-amino-acid chain; its full sequence is UDP-N-acetylmuramate--L-alanine ligase (472 aa).

122 to 128 contacts ATP; that stretch reads GTHGKTT.

The protein belongs to the MurCDEF family.

Its subcellular location is the cytoplasm. It catalyses the reaction UDP-N-acetyl-alpha-D-muramate + L-alanine + ATP = UDP-N-acetyl-alpha-D-muramoyl-L-alanine + ADP + phosphate + H(+). Its pathway is cell wall biogenesis; peptidoglycan biosynthesis. Cell wall formation. This chain is UDP-N-acetylmuramate--L-alanine ligase, found in Thermobifida fusca (strain YX).